Reading from the N-terminus, the 373-residue chain is Chaperone protein DnaJ (373 aa).

One can recognise a J domain in the interval aspartate 5–glycine 70. A CR-type zinc finger spans residues glycine 133 to histidine 211. Cysteine 146, cysteine 149, cysteine 163, cysteine 166, cysteine 185, cysteine 188, cysteine 199, and cysteine 202 together coordinate Zn(2+). CXXCXGXG motif repeat units follow at residues cysteine 146–glycine 153, cysteine 163–glycine 170, cysteine 185–glycine 192, and cysteine 199–glycine 206. Residues leucine 346 to glutamine 373 are disordered. Over residues serine 354 to glutamine 373 the composition is skewed to basic and acidic residues.

Belongs to the DnaJ family. Homodimer. It depends on Zn(2+) as a cofactor.

It localises to the cytoplasm. In terms of biological role, participates actively in the response to hyperosmotic and heat shock by preventing the aggregation of stress-denatured proteins and by disaggregating proteins, also in an autonomous, DnaK-independent fashion. Unfolded proteins bind initially to DnaJ; upon interaction with the DnaJ-bound protein, DnaK hydrolyzes its bound ATP, resulting in the formation of a stable complex. GrpE releases ADP from DnaK; ATP binding to DnaK triggers the release of the substrate protein, thus completing the reaction cycle. Several rounds of ATP-dependent interactions between DnaJ, DnaK and GrpE are required for fully efficient folding. Also involved, together with DnaK and GrpE, in the DNA replication of plasmids through activation of initiation proteins. This Methylobacillus flagellatus (strain ATCC 51484 / DSM 6875 / VKM B-1610 / KT) protein is Chaperone protein DnaJ.